The sequence spans 1407 residues: MKDLLNLLKSQGQVEEFDSIRISLASPEMIRSWSFGEVKKPETINYRTFKPEREGLFCAKIFGPVKDYECLCGKYKRMKHRGIICEKCGVEVTLAKVRRERMGHIELASPVAHIWFLKSLPSRIGLLLDMTLRDIERVLYFESYVVTEPGMTTLERGQLLTDEQYFEAMEEFGDEFEAQMGAEAIQTLMRAIDLETEVQRLREEIPNTSSETKIKKYSKRLKLLEAFHFSGNKPEWMVMEVLPVLPPDLRPLVPLDGGRFATSDLNDLYRRVINRNNRLKRLLDLNAPDIIVRNEKRMLQEAVDALLDNGRRGRAITGSNKRPLKSLADMIKGKQGRFRQNLLGKRVDYSGRSVIVVGPTLRLHQCGLPKKMALELFKPFIFSKLELRGLATTIKAAKKMVEREEAVVWDILDEVIREHPVLLNRAPTLHRLGIQAFEPVLIEGKAIQLHPLVCSAYNADFDGDQMAVHVPLTIEAQLEARALMMSTNNILSPASGEPIIVPSQDVVLGLYWMTRERINAKGEGMVFADTMEVSRAYYSKQVDLQARIKVRLTETLIGAEGERTSETKLVQTTVGRVLLWEIVPAGIPLEMINRPMVKKAISAVINYCYRVVGLKATVIFADRLMYMGYDFSTKSGSSIGVNDFTIPAAKADIIARADAEVKEIETQYASGLVTQGEKYNKVIDIWSRANDLVAKSMMEGISKETVINRDGVEEQQSSFNSVFMYADSGARGSPAQIRQLAGMRGLMARPDGSIIETPIKANFREGLNVLQYFISTHGARKGLADTALKTANSGYLTRRLVDVAQDLVVTLQDCGTDSGLTMSPVIEGGDVIESLGDRILGRVVARDVIRPGSDEILVPAGTMIDEAWVGRIEEMGIDEVLVRSPITCESRNGICSMCYGRDLARGHRVNPGEAVGVIAAQSIGEPGTQLTMRTFHIGGAASRASAADSVQVKQEGTVRLLNVKVVSNPAGNLVAVSRSGELAIADASGRERERYKIPYGALITVKDGETVKGGQIVAKWDPHTHPIVSEVAGTVAFSGMEEGLSIRRQTDELTGLSSIEILDPAERPSAGKDLRPAITLVDAKGKELFLANTNVPAHYMLPAKAILTINNGDIINVGDIVARIPQEGSKTRDITGGLPRVADLFEARRPKEPAILAEISGTVSFGKETKGKRRLIITPTDGQVLDDGSTHYEVLIPKHRQLTVFEGEMVAKGEVVSDGPANPHDILRLQGVEALARYITNEIQDVYRLQGVKINDKHIETIVRQMLRKVEITTMGDSSFVKGEQVELTSVLEENEKLRAEGKQPAHYERLLLGITKASLATESFISAASFQETTRVLTEAAVTGKKDNLRGLKENVVVGRLIPAGTGLAYHNDRKRRREEALSEQVGVSAEDVEAALTEALKSSVS.

Zn(2+) contacts are provided by cysteine 70, cysteine 72, cysteine 85, and cysteine 88. Aspartate 460, aspartate 462, and aspartate 464 together coordinate Mg(2+). Zn(2+) is bound by residues cysteine 814, cysteine 888, cysteine 895, and cysteine 898.

This sequence belongs to the RNA polymerase beta' chain family. The RNAP catalytic core consists of 2 alpha, 1 beta, 1 beta' and 1 omega subunit. When a sigma factor is associated with the core the holoenzyme is formed, which can initiate transcription. The cofactor is Mg(2+). Zn(2+) is required as a cofactor.

The enzyme catalyses RNA(n) + a ribonucleoside 5'-triphosphate = RNA(n+1) + diphosphate. DNA-dependent RNA polymerase catalyzes the transcription of DNA into RNA using the four ribonucleoside triphosphates as substrates. The polypeptide is DNA-directed RNA polymerase subunit beta' (Cellvibrio japonicus (strain Ueda107) (Pseudomonas fluorescens subsp. cellulosa)).